The chain runs to 1248 residues: MPGLYCPTSWTPLPLTDSCVRAYAKGPCLSLRARLTYHNPQPQPVEGVFVYPLAEAEVVSGFEAEAAGRRVSFQLHSRRRSQAACCRALGPGLGTSTPRRCAQGHLVLNLAQARSTLVLPTGLVAAAGTMTVTLCSSRELPSRPDGVMHVALPTVFTPLAQPNLPGSPRSPGLCDDSPTSCFGVGSPEEERPTWEQPTATPDVFSGPARCPAPYTFSFEMLVTGPCLLAGLESPSHALRADALPHASSAATIRVTLAEGHQCDRALEILLHPSEPHQPHLMLETGSLSSAEYEAQVRARHDFQRLQQRDSGGERQVWFLQRRFHKDILLNPVLVLNFCPDLSSKPGHLNAATRELLFLLDGSGAGHKDAIVLAVKSLPAQTLVNLAIFGTLVQPLFPESRPCSDDTVQLICESIETLQTVNGPPDMLAVLDWALGQPQHRAYPRQMFLITAASPTAATTHQALEFMRWHRGAARCFSFALAPACRQLLHDLSVLSRGQAYFLRPGERLQPKLVQALRKALEPALSDISVDWFVPDAVEALLTPREIPALYPGDQLLGYCSLFRVDGFRSHALGGQEPGWQSLAGSVFPSPEEVLSATSPGTEPTHTTEPLGTGTVSAELSSPWAVGDSEQSMEALTDPVMDPGPNPSSDTAIWRRIFQSSYIREQYVLTHCSASPEPGPGSTCSSESPGSQGPGSPSGSRPLDPPSQQGCRSLAWVEPAGSRSCPLPVPPPSPFKVGAMSAEVLGRRQRAALAGRSLSSPSGRANPVPGRARHPSLDAIPDGLGPEPGQQLGQGLDDSGNLLSPAPLDWDMLMEPSFLFKPVPSSAESAPPAECLPPQAPRCHVVIRALCGEQPMCWEVGVGLEELWGPGDGSQPESLPMREAAWDQALHRLTAASVVQDNEQLALRGRAETRAEQGRVRRSWLRAIQTSKVSSAPSCFTCPVAVDATTREVLPGALQVWSSDPAELSGMSASQDQLAAAPLSTAVHSKGHQGGCSAGAWDLDLNDNSKSALGEPISPTGDHHGLPHQPPASSRLSLGRHRRLCSSNKGQTHENSNDGSNHDYLPLVRLQEAPGSFRLDEPFCAAVCIPQERLCRASPFAAHRASLSPTSASSPWAFLSPGIGQGDSATASCSQSPSSGSEGPGQVDSGRGSDTEASEGMERQDSSDLRGRTWATAVALAWLEHRCAAAFGEWELTASKADCWLRAQHLPDGLDLTALKAAARGLFLLLRHWDQNLQLHLLCYSPSNV.

The VIT domain occupies 1–138 (MPGLYCPTSW…TMTVTLCSSR (138 aa)). Residues 184 to 204 (VGSPEEERPTWEQPTATPDVF) form a disordered region. Positions 354–527 (ELLFLLDGSG…KALEPALSDI (174 aa)) constitute a VWFA domain. Disordered regions lie at residues 590 to 650 (PEEV…SSDT), 672 to 710 (SASPEPGPGSTCSSESPGSQGPGSPSGSRPLDPPSQQGC), 751 to 789 (ALAGRSLSSPSGRANPVPGRARHPSLDAIPDGLGPEPGQ), 1008 to 1037 (SKSALGEPISPTGDHHGLPHQPPASSRLSL), and 1126 to 1168 (DSAT…SSDL). The segment covering 595–619 (SATSPGTEPTHTTEPLGTGTVSAEL) has biased composition (polar residues). 3 stretches are compositionally biased toward low complexity: residues 684 to 701 (SSESPGSQGPGSPSGSRP), 751 to 764 (ALAGRSLSSPSGRA), and 780 to 789 (PDGLGPEPGQ). A compositionally biased stretch (low complexity) spans 1127–1145 (SATASCSQSPSSGSEGPGQ). The span at 1159-1168 (GMERQDSSDL) shows a compositional bias: basic and acidic residues.

This Mus musculus (Mouse) protein is von Willebrand factor A domain-containing protein 5B2 (Vwa5b2).